The following is a 137-amino-acid chain: Large-conductance mechanosensitive channel (137 aa).

2 helical membrane passes run 10–30 (FAMR…AAFG) and 76–96 (GVFL…FMAI).

Belongs to the MscL family. In terms of assembly, homopentamer.

The protein resides in the cell inner membrane. Its function is as follows. Channel that opens in response to stretch forces in the membrane lipid bilayer. May participate in the regulation of osmotic pressure changes within the cell. The chain is Large-conductance mechanosensitive channel from Erwinia tasmaniensis (strain DSM 17950 / CFBP 7177 / CIP 109463 / NCPPB 4357 / Et1/99).